Reading from the N-terminus, the 204-residue chain is Recombination protein RecR (204 aa).

Residues 58–75 (CSVCQNITDVGVDPCALC) form a C4-type zinc finger. Positions 83-181 (SVICVVESPV…HVTKIARGIP (99 aa)) constitute a Toprim domain.

The protein belongs to the RecR family.

Its function is as follows. May play a role in DNA repair. It seems to be involved in an RecBC-independent recombinational process of DNA repair. It may act with RecF and RecO. This is Recombination protein RecR from Pelodictyon phaeoclathratiforme (strain DSM 5477 / BU-1).